The primary structure comprises 224 residues: Large ribosomal subunit protein uL4 (224 aa).

A disordered region spans residues 52–109 (AAARQGTHSTKTRGDVSGGGRKPYRQKGTGRARQGSTRAPQFTGGGVVHGPKPRDYSQ).

The protein belongs to the universal ribosomal protein uL4 family. Part of the 50S ribosomal subunit.

Functionally, one of the primary rRNA binding proteins, this protein initially binds near the 5'-end of the 23S rRNA. It is important during the early stages of 50S assembly. It makes multiple contacts with different domains of the 23S rRNA in the assembled 50S subunit and ribosome. Its function is as follows. Forms part of the polypeptide exit tunnel. This Mycobacterium marinum (strain ATCC BAA-535 / M) protein is Large ribosomal subunit protein uL4.